Here is a 267-residue protein sequence, read N- to C-terminus: MFRWSWCRLIISKVSAESYVDYLQNSDRELPALSEIFPRHGTGTGELVKFHSLLCEAMKDHNFNYVGIKVVPPTSPPLQCLRATEPVCVPIFSNSFQGSVFSAKQHRIQFVEPLFVIRLGRDPPTQLTANTVPAVCDAFFPGVEFVGSRYPFYPPHTTGFAADLGGCVAVHLGEAVSLGSASLESLGDTNFVVTRREEPIQVGAGKNCLGGPGAAVALAVSYAASMGWPLREKHYIFCSGVGSRSPALAGEYKVNYGAYGSVSASLT.

In terms of assembly, component of the REH2-associated complex (REH2C) composed of helicase REH2, associated factors H2F1 and H2F2, and mRNAs at various editing stages; the formation of the complex is RNA-independent. Interacts with various editing complexes including the RNA editing core (RECC) complex, the gRNA-binding (GRBC) complex (also known as the MRB1 complex) and the RNA editing mediator (REMC) complex.

Its subcellular location is the mitochondrion. Its function is as follows. May play a role in mitochondrial mRNA editing by facilitating the association of the gRNA-binding (GRBC) complex with the RNA editing core (RECC) complex. However, appears to be dispensable for mRNA editing per se. This chain is REH2-associated factor 2, found in Trypanosoma brucei brucei (strain 927/4 GUTat10.1).